Here is a 231-residue protein sequence, read N- to C-terminus: Dephospho-CoA kinase domain-containing protein (231 aa).

The DPCK domain maps to 3-207 (LVGLTGGIAS…HSLEYLPLRL (205 aa)). ATP is bound at residue 8-15 (GGIASGKS).

It belongs to the CoaE family.

This chain is Dephospho-CoA kinase domain-containing protein (DCAKD), found in Bos taurus (Bovine).